The sequence spans 511 residues: MTSTPKPLVLIILDGFGHSEVPEHNAIFAANTPVYDRLRATLPHGLISGSGMDVGLPDGQMGNSEVGHMNLGAGRVVYQDFTRVTKAIRDGEFFKNPVLTGAVDKAASAGKAVHILGLLSDGGVHSHQDHLVAMAELAAQRGAEKIYLHAFLDGRDTPPRSAQSSIELLDATFAKLGKGRIASLIGRYYAMDRDNRWDRVSAAYNLIVDSAAEYTADTAQAGLEAAYARDESDEFVKATRIGEAVKVEDGDAVVFMNFRADRARELSRAFVEPDFTEFARARLPKMAAYIGLTQYSAKIPAPAAFAPSSLNNVLGEYLAKNGKTQLRIAETEKYAHVTFFFSGGREEPFEGEERILIPSPKVATYDLQPEMNAPQVTDRIVEAIEQQRFDVIVVNYANGDMVGHTGVFEAAVKAVEALDTCVGRIVDALEKVGGEALITADHGNVEQMEDECTGQAHTAHTTEPVPFIYVGKRNLKVRDGGVLADVAPTMLQLLGLEKPVEMTGTSILVDA.

Mn(2+) contacts are provided by aspartate 14 and serine 64. Residue serine 64 is the Phosphoserine intermediate of the active site. Residues histidine 125, 155 to 156, arginine 187, arginine 193, 259 to 262, and lysine 333 contribute to the substrate site; these read RD and RADR. 5 residues coordinate Mn(2+): aspartate 400, histidine 404, aspartate 441, histidine 442, and histidine 460.

The protein belongs to the BPG-independent phosphoglycerate mutase family. As to quaternary structure, monomer. Requires Mn(2+) as cofactor.

It catalyses the reaction (2R)-2-phosphoglycerate = (2R)-3-phosphoglycerate. Its pathway is carbohydrate degradation; glycolysis; pyruvate from D-glyceraldehyde 3-phosphate: step 3/5. Its function is as follows. Catalyzes the interconversion of 2-phosphoglycerate and 3-phosphoglycerate. This is 2,3-bisphosphoglycerate-independent phosphoglycerate mutase from Pseudomonas putida (strain GB-1).